Consider the following 60-residue polypeptide: Large ribosomal subunit protein uL30 (60 aa).

It belongs to the universal ribosomal protein uL30 family. In terms of assembly, part of the 50S ribosomal subunit.

This Xanthobacter autotrophicus (strain ATCC BAA-1158 / Py2) protein is Large ribosomal subunit protein uL30.